The following is a 436-amino-acid chain: MRQALPLVTRQGDRIAIVSGLRTPFARQATAFHGIPAVDLGKMVVGELLARSEIPADAIEQLVFGQVVQMPEAPNIAREIVLGTGMNVHTDAYSVSRACATSFQAVANVAESLMAGTIRAGIAGGADSSSVLPIGVSKALARVLVDVNKARTTRQRLTLFSRLRLRDLLPVPPAVAEYSTGLRMGDTAEQMAKTYGITREQQDALAHRSHQRAAQAWAEGKLAEEVMTTYVPPYKNPFAEDNNIRGASTLADYAKLRPAFDRKHGSVTAANSTPLTDGAAAVILMTESRAKELGLRPLGYLRSYAFTAIDVWQDMLLGPAWSTPLALERAGLTMADLTLFDMHEAFAAQTLANLQLLGSERFAREVFGRAQATGEVDDAKFNVLGGSIAYGHPFAATGARMITQTLHELRRRGGGFGLVTACAAGGLGAAMVLEAE.

The active-site Acyl-thioester intermediate is the Cys99. Residues His392 and Cys422 each act as proton acceptor in the active site.

It belongs to the thiolase-like superfamily. Thiolase family. In terms of assembly, heterotetramer of two alpha chains (FadJ) and two beta chains (FadI).

The protein resides in the cytoplasm. It catalyses the reaction an acyl-CoA + acetyl-CoA = a 3-oxoacyl-CoA + CoA. Its pathway is lipid metabolism; fatty acid beta-oxidation. Catalyzes the final step of fatty acid oxidation in which acetyl-CoA is released and the CoA ester of a fatty acid two carbons shorter is formed. The protein is 3-ketoacyl-CoA thiolase of Salmonella typhi.